A 360-amino-acid chain; its full sequence is C-C chemokine receptor type 2 (360 aa).

Over 1-42 the chain is Extracellular; the sequence is MLSTSRSRFIRNTNGSGEEVTTFFDYDYGAPCHKFDVKQIGA. The N-linked (GlcNAc...) asparagine glycan is linked to asparagine 14. Tyrosine 26 carries the post-translational modification Sulfotyrosine. The chain crosses the membrane as a helical span at residues 43–70; sequence QLLPPLYSLVFIFGFVGNMLVVLILINC. Topologically, residues 71–80 are cytoplasmic; that stretch reads KKLKSLTDIY. The chain crosses the membrane as a helical span at residues 81–100; that stretch reads LLNLAISDLLFLITLPLWAH. Over 101–114 the chain is Extracellular; the sequence is SAANEWVFGNAMCK. Cysteine 113 and cysteine 190 are joined by a disulfide. Residues 115–136 traverse the membrane as a helical segment; sequence LFTGLYHIGYLGGIFFIILLTI. Residues 137 to 153 lie on the Cytoplasmic side of the membrane; it reads DRYLAIVHAVFALKART. A Phosphotyrosine; by JAK2 modification is found at tyrosine 139. Residues 154 to 178 traverse the membrane as a helical segment; the sequence is VTFGVVTSVITWLVAVFASVPGIIF. Topologically, residues 179 to 206 are extracellular; that stretch reads TKCQEEDSVYICGPYFPRGWNNFHTIMR. Residues 207-226 traverse the membrane as a helical segment; sequence NILGLVLPLLIMVICYSGIL. Residues 227 to 243 are Cytoplasmic-facing; it reads KTLLRCRNEKKRHRAVR. A helical transmembrane segment spans residues 244-268; sequence LIFTIMIVYFLFWTPYNIVILLNTF. Over 269–285 the chain is Extracellular; sequence QEFFGLSNCESTRQLDQ. A helical membrane pass occupies residues 286–309; it reads ATQVTETLGMTHCCINPIIYAFVG. Topologically, residues 310–360 are cytoplasmic; it reads EKFRRYLSMFFRKYITKRFCKQCPVFYRETVDGVTSTNTPSTAEQEVSVGL.

The protein belongs to the G-protein coupled receptor 1 family. Interacts with ARRB1. Interacts (via extracellular N-terminal region) with beta-defensin DEFB106A/DEFB106B; this interaction may preferentially require specific tyrosine sulfation on CCR2. Interacts with NUP85; the interaction is required for CCR2 clusters formation on the cell membrane and CCR2 signaling. In terms of processing, N-glycosylated. Sulfation increases the affinity for both monomeric and dimeric CCL2 with stronger binding to the monomeric form. Binding of sulfated CCR2 to CCL2 promotes conversion of CCL2 from dimer to monomer.

It is found in the cell membrane. Functionally, key functional receptor for CCL2 but can also bind CCL7 and CCL12. Its binding with CCL2 on monocytes and macrophages mediates chemotaxis and migration induction through the activation of the PI3K cascade, the small G protein Rac and lamellipodium protrusion. Also acts as a receptor for the beta-defensin DEFB106A/DEFB106B. Regulates the expression of T-cell inflammatory cytokines and T-cell differentiation, promoting the differentiation of T-cells into T-helper 17 cells (Th17) during inflammation. Facilitates the export of mature thymocytes by enhancing directional movement of thymocytes to sphingosine-1-phosphate stimulation and up-regulation of S1P1R expression; signals through the JAK-STAT pathway to regulate FOXO1 activity leading to an increased expression of S1P1R. Plays an important role in mediating peripheral nerve injury-induced neuropathic pain. Increases NMDA-mediated synaptic transmission in both dopamine D1 and D2 receptor-containing neurons, which may be caused by MAPK/ERK-dependent phosphorylation of GRIN2B/NMDAR2B. Mediates the recruitment of macrophages and monocytes to the injury site following brain injury. The sequence is that of C-C chemokine receptor type 2 (CCR2) from Macaca mulatta (Rhesus macaque).